Here is a 655-residue protein sequence, read N- to C-terminus: MMLGAVRRYGVVHALRASVPRTICRPSNSQLLRCQTSPVTACPQSVRLLHKSSPFFSSASAQAQAQPDDLQSAAPQEPLREFTDLAERGLVDPKIIRAIVKDMNIKTMTDVQSQTLREILQGDDVLAQAKTGTGKTLAFLTPVFQNIMKDPSLKGLNWRRSQASSSDIRAIIISPTRELAEQIAVEARRLAAHSGVIVQTAVGGTQKREGLRRIQREGCHVLIGTPGRLKDVLSDSYNGVTAPNLSTLVLDEADRLLDDGFSDAIIDIQRLLPDPMKVDRQTLMFSATVPREVMQMVRKTMKPNFKFVKTVRDDEVPTHLTVPQKYVILRGYENAMPALLEFVTKYVEGEKENPNQRPFKAIVYFNSTVQTNLVYETFRNIVEQRHHPLRRVRVYEIHSQLTQARRTRSSDFFRAAKSAILFSSDVTARGMDFPDVTHVIQVSIPRDRATYIHRLGRTARANKTGEGWVLTHRGELPEFLKQLEGIPLNLDKETFATATVDMTKPELDPKSPATRFIQEIKDAVREVPESLKRRAYTSLLGPLRGYFARKQDLIQAINNCVVHGYGLPVPPQLSPTLARNLGLDRVPGVRIANYRGSSDNMSTRPDYRGGDRDMWASNSRRGREFNSDRRESRFGNHRNADDFFGGRRRAYRDDY.

The transit peptide at 1–56 (MMLGAVRRYGVVHALRASVPRTICRPSNSQLLRCQTSPVTACPQSVRLLHKSSPFF) directs the protein to the mitochondrion. The Q motif motif lies at 84–113 (DLAERGLVDPKIIRAIVKDMNIKTMTDVQS). The Helicase ATP-binding domain maps to 116-307 (LREILQGDDV…RKTMKPNFKF (192 aa)). 129 to 136 (AKTGTGKT) is an ATP binding site. The short motif at 251–254 (DEAD) is the DEAD box element. Residues 341–503 (EFVTKYVEGE…TFATATVDMT (163 aa)) enclose the Helicase C-terminal domain. Residues 594–642 (YRGSSDNMSTRPDYRGGDRDMWASNSRRGREFNSDRRESRFGNHRNADD) are disordered. Basic and acidic residues-rich tracts occupy residues 605-614 (PDYRGGDRDM) and 621-642 (RGRE…NADD).

It belongs to the DEAD box helicase family. DDX18/HAS1 subfamily.

It localises to the mitochondrion matrix. It catalyses the reaction ATP + H2O = ADP + phosphate + H(+). ATP-dependent RNA helicase required for mitochondrial splicing of group I and II introns. Also required for efficient mitochondrial translation. The protein is ATP-dependent RNA helicase mss116, mitochondrial (mss116) of Aspergillus fumigatus (strain ATCC MYA-4609 / CBS 101355 / FGSC A1100 / Af293) (Neosartorya fumigata).